Consider the following 169-residue polypeptide: Large ribosomal subunit protein uL10 (169 aa).

It belongs to the universal ribosomal protein uL10 family. As to quaternary structure, part of the ribosomal stalk of the 50S ribosomal subunit. The N-terminus interacts with L11 and the large rRNA to form the base of the stalk. The C-terminus forms an elongated spine to which L12 dimers bind in a sequential fashion forming a multimeric L10(L12)X complex.

Forms part of the ribosomal stalk, playing a central role in the interaction of the ribosome with GTP-bound translation factors. The sequence is that of Large ribosomal subunit protein uL10 from Rickettsia felis (strain ATCC VR-1525 / URRWXCal2) (Rickettsia azadi).